Reading from the N-terminus, the 310-residue chain is Aspartate carbamoyltransferase catalytic subunit (310 aa).

Arginine 58 and threonine 59 together coordinate carbamoyl phosphate. L-aspartate is bound at residue lysine 86. Residues arginine 108, histidine 136, and glutamine 139 each contribute to the carbamoyl phosphate site. Positions 169 and 224 each coordinate L-aspartate. Positions 265 and 266 each coordinate carbamoyl phosphate.

This sequence belongs to the aspartate/ornithine carbamoyltransferase superfamily. ATCase family. Heterododecamer (2C3:3R2) of six catalytic PyrB chains organized as two trimers (C3), and six regulatory PyrI chains organized as three dimers (R2).

The enzyme catalyses carbamoyl phosphate + L-aspartate = N-carbamoyl-L-aspartate + phosphate + H(+). The protein operates within pyrimidine metabolism; UMP biosynthesis via de novo pathway; (S)-dihydroorotate from bicarbonate: step 2/3. In terms of biological role, catalyzes the condensation of carbamoyl phosphate and aspartate to form carbamoyl aspartate and inorganic phosphate, the committed step in the de novo pyrimidine nucleotide biosynthesis pathway. The protein is Aspartate carbamoyltransferase catalytic subunit of Trichlorobacter lovleyi (strain ATCC BAA-1151 / DSM 17278 / SZ) (Geobacter lovleyi).